A 246-amino-acid polypeptide reads, in one-letter code: Protein phosphatase PhpP (246 aa).

A PPM-type phosphatase domain is found at 2-240; it reads EISLLTDVGQ…DNITVALVSM (239 aa). Positions 36, 37, 192, and 231 each coordinate Mn(2+).

Belongs to the PP2C family. Mn(2+) is required as a cofactor.

The protein resides in the cytoplasm. The catalysed reaction is O-phospho-L-seryl-[protein] + H2O = L-seryl-[protein] + phosphate. It catalyses the reaction O-phospho-L-threonyl-[protein] + H2O = L-threonyl-[protein] + phosphate. In terms of biological role, protein phosphatase able to dephosphorylate StkP-P and other phosphorylated protein substrates. PhpP and its cognate protein kinase StkP appear to constitute a functional signaling couple in vivo, PhpP's primary role being probably to control phosphorylation levels of StkP and of its targets. PhpP thus performs an essential control of StkP activity. Also dephosphorylates DivIVA in vivo. In Streptococcus pneumoniae serotype 2 (strain D39 / NCTC 7466), this protein is Protein phosphatase PhpP (phpP).